Reading from the N-terminus, the 359-residue chain is GATA-binding factor 1-A (359 aa).

The disordered stretch occupies residues 1 to 21 (MDYTTLTTQDPDPNYTESGLA). GATA-type zinc fingers lie at residues 178–202 (CVNC…CNAC) and 232–256 (CSNC…CNAC). Disordered regions lie at residues 271 to 311 (MKKE…SPYP) and 323 to 359 (PMGH…VTPP). Positions 279 to 291 (RNRKVSSRSKKKK) are enriched in basic residues.

As to expression, expressed in the developing ventral blood island, and in both tadpole and adult erythrocytes.

The protein localises to the nucleus. Transcription factor that acts synergistically with tal1/scl and lmo2 to specify embryonic dorsal mesoderm to a hematopoietic fate. The protein is GATA-binding factor 1-A (gata1-a) of Xenopus laevis (African clawed frog).